A 26-amino-acid chain; its full sequence is Probable early E4 17 kDa protein (26 aa).

This is Probable early E4 17 kDa protein from Homo sapiens (Human).